The chain runs to 59 residues: Large ribosomal subunit protein uL30 (59 aa).

This sequence belongs to the universal ribosomal protein uL30 family. In terms of assembly, part of the 50S ribosomal subunit.

This chain is Large ribosomal subunit protein uL30, found in Buchnera aphidicola subsp. Schizaphis graminum (strain Sg).